We begin with the raw amino-acid sequence, 66 residues long: Small ribosomal subunit protein bS21 (66 aa).

Belongs to the bacterial ribosomal protein bS21 family.

The sequence is that of Small ribosomal subunit protein bS21 from Rickettsia typhi (strain ATCC VR-144 / Wilmington).